Reading from the N-terminus, the 324-residue chain is Porphobilinogen deaminase 1 (324 aa).

Cys249 carries the post-translational modification S-(dipyrrolylmethanemethyl)cysteine.

The protein belongs to the HMBS family. In terms of assembly, monomer. Requires dipyrromethane as cofactor.

The enzyme catalyses 4 porphobilinogen + H2O = hydroxymethylbilane + 4 NH4(+). Its pathway is porphyrin-containing compound metabolism; protoporphyrin-IX biosynthesis; coproporphyrinogen-III from 5-aminolevulinate: step 2/4. Tetrapolymerization of the monopyrrole PBG into the hydroxymethylbilane pre-uroporphyrinogen in several discrete steps. This is Porphobilinogen deaminase 1 (hemC1) from Streptomyces avermitilis (strain ATCC 31267 / DSM 46492 / JCM 5070 / NBRC 14893 / NCIMB 12804 / NRRL 8165 / MA-4680).